The following is a 238-amino-acid chain: ATP-dependent dethiobiotin synthetase BioD (238 aa).

ATP is bound at residue glycine 12–valine 17. Threonine 16 is a binding site for Mg(2+). Lysine 37 is an active-site residue. Threonine 41 provides a ligand contact to substrate. ATP is bound by residues aspartate 50, glutamate 109 to glycine 112, glycine 170 to serine 171, and proline 200 to glycine 202. Positions 50 and 109 each coordinate Mg(2+).

Belongs to the dethiobiotin synthetase family. Homodimer. Mg(2+) is required as a cofactor.

Its subcellular location is the cytoplasm. The enzyme catalyses (7R,8S)-7,8-diammoniononanoate + CO2 + ATP = (4R,5S)-dethiobiotin + ADP + phosphate + 3 H(+). Its pathway is cofactor biosynthesis; biotin biosynthesis; biotin from 7,8-diaminononanoate: step 1/2. Catalyzes a mechanistically unusual reaction, the ATP-dependent insertion of CO2 between the N7 and N8 nitrogen atoms of 7,8-diaminopelargonic acid (DAPA, also called 7,8-diammoniononanoate) to form a ureido ring. The sequence is that of ATP-dependent dethiobiotin synthetase BioD from Frankia casuarinae (strain DSM 45818 / CECT 9043 / HFP020203 / CcI3).